A 678-amino-acid polypeptide reads, in one-letter code: Glutamate--cysteine ligase (678 aa).

This sequence belongs to the glutamate--cysteine ligase type 3 family.

The enzyme catalyses L-cysteine + L-glutamate + ATP = gamma-L-glutamyl-L-cysteine + ADP + phosphate + H(+). The protein operates within sulfur metabolism; glutathione biosynthesis; glutathione from L-cysteine and L-glutamate: step 1/2. Its activity is regulated as follows. Feedback inhibition by glutathione. Catalyzes the ATP-dependent condensation of cysteine and glutamate to form the dipeptide gamma-glutamylcysteine (gamma-GC), the first and rate-limiting step in the production of glutathione (GSH). The polypeptide is Glutamate--cysteine ligase (GSH1) (Saccharomyces cerevisiae (strain ATCC 204508 / S288c) (Baker's yeast)).